A 418-amino-acid polypeptide reads, in one-letter code: ATP phosphoribosyltransferase regulatory subunit (418 aa).

The protein belongs to the class-II aminoacyl-tRNA synthetase family. HisZ subfamily. In terms of assembly, heteromultimer composed of HisG and HisZ subunits.

It localises to the cytoplasm. It participates in amino-acid biosynthesis; L-histidine biosynthesis; L-histidine from 5-phospho-alpha-D-ribose 1-diphosphate: step 1/9. Functionally, required for the first step of histidine biosynthesis. May allow the feedback regulation of ATP phosphoribosyltransferase activity by histidine. This chain is ATP phosphoribosyltransferase regulatory subunit, found in Acetivibrio thermocellus (strain ATCC 27405 / DSM 1237 / JCM 9322 / NBRC 103400 / NCIMB 10682 / NRRL B-4536 / VPI 7372) (Clostridium thermocellum).